The primary structure comprises 315 residues: MNTSAEGQSPTSPQSVAILGAGAWGSTLAMLAQGQGHRVRVWNRRKGLDLAEVLQGSQILISAVSMAGVRPVVEAVRQVGIPPQAILVSATKGLDPLQLLTPTQIWGATFPEQPLVVLSGPNLSAEIRQGLPAAAVVASRDPWAAVQVQYALSSERFRLYTSSDPLGVELGGTLKNVIAIAVGVCDGLQLGANARAALVTRGLAEMIRVGSKLGARAETFNGLSGLGDLLATCHSRLSRNYRVGYGLGQGQPLSQILAEIEGTAEGVYTAPVVVEIAAQHGIQVPITQEVHLLLQGQTTPTAALTRLMERQLTSE.

Residues Trp24, Arg44, Arg45, and Lys92 each contribute to the NADPH site. Lys92 and Gly120 together coordinate sn-glycerol 3-phosphate. Ser124 lines the NADPH pocket. Sn-glycerol 3-phosphate is bound by residues Lys175, Asp228, Ser238, Arg239, and Asn240. Residue Lys175 is the Proton acceptor of the active site. Arg239 is an NADPH binding site. Glu265 provides a ligand contact to NADPH.

This sequence belongs to the NAD-dependent glycerol-3-phosphate dehydrogenase family.

It localises to the cytoplasm. It catalyses the reaction sn-glycerol 3-phosphate + NAD(+) = dihydroxyacetone phosphate + NADH + H(+). It carries out the reaction sn-glycerol 3-phosphate + NADP(+) = dihydroxyacetone phosphate + NADPH + H(+). It participates in membrane lipid metabolism; glycerophospholipid metabolism. In terms of biological role, catalyzes the reduction of the glycolytic intermediate dihydroxyacetone phosphate (DHAP) to sn-glycerol 3-phosphate (G3P), the key precursor for phospholipid synthesis. This chain is Glycerol-3-phosphate dehydrogenase [NAD(P)+], found in Synechococcus sp. (strain JA-2-3B'a(2-13)) (Cyanobacteria bacterium Yellowstone B-Prime).